The sequence spans 446 residues: 3-phosphoshikimate 1-carboxyvinyltransferase (446 aa).

Lys30, Ser31, and Arg35 together coordinate 3-phosphoshikimate. Lys30 lines the phosphoenolpyruvate pocket. Positions 112 and 140 each coordinate phosphoenolpyruvate. Residues Ser186, Ser187, Gln188, Ser215, Glu334, and His361 each contribute to the 3-phosphoshikimate site. Gln188 is a binding site for phosphoenolpyruvate. Glu334 (proton acceptor) is an active-site residue. Phosphoenolpyruvate contacts are provided by Arg365, Arg406, and Lys431.

Belongs to the EPSP synthase family. Monomer.

The protein resides in the cytoplasm. It carries out the reaction 3-phosphoshikimate + phosphoenolpyruvate = 5-O-(1-carboxyvinyl)-3-phosphoshikimate + phosphate. The protein operates within metabolic intermediate biosynthesis; chorismate biosynthesis; chorismate from D-erythrose 4-phosphate and phosphoenolpyruvate: step 6/7. Its function is as follows. Catalyzes the transfer of the enolpyruvyl moiety of phosphoenolpyruvate (PEP) to the 5-hydroxyl of shikimate-3-phosphate (S3P) to produce enolpyruvyl shikimate-3-phosphate and inorganic phosphate. This chain is 3-phosphoshikimate 1-carboxyvinyltransferase, found in Streptomyces avermitilis (strain ATCC 31267 / DSM 46492 / JCM 5070 / NBRC 14893 / NCIMB 12804 / NRRL 8165 / MA-4680).